The primary structure comprises 390 residues: Putative nickel insertion protein (390 aa).

Belongs to the LarC family.

This is Putative nickel insertion protein from Geotalea uraniireducens (strain Rf4) (Geobacter uraniireducens).